We begin with the raw amino-acid sequence, 234 residues long: MNLSRFAPSPSSDSLISTLRPRAAVRRLHSNITGPMTPFKTAVNAYVASEGTDNSYVVRPRLYNDKRAQSDGSNALLSSIGPSGTTKRPRDEMDCFTDTHKHKRGDGNKSRRREQCRANQARYRDKQRNAQQQLERSVEQLQSELSTLKHRNLDLASRQRTNQSPWNTVAEVFRLLGVCFRSPWRVTCVQEMRNHSEMRQILAILERSFTHDVAMGDLRGIDALMEQLLQFSQY.

Residues R67 to L134 are disordered. A compositionally biased stretch (polar residues) spans S70–T86. Over residues R88 to R128 the composition is skewed to basic and acidic residues. Residues D106–V169 form the bZIP domain. The basic motif stretch occupies residues K109–R128. The interval L134–L155 is leucine-zipper.

The protein belongs to the bZIP family. In terms of assembly, interacts with PKZ1.

It is found in the nucleus. Functionally, required for normal zoospore movement, formation of appressoria by germinated zoospore cysts and plant infection. The sequence is that of bZIP transcription factor 1 from Phytophthora infestans (Potato late blight agent).